The primary structure comprises 364 residues: Chorismate synthase (364 aa).

Residue Arg47 coordinates NADP(+). Residues 125–127, Gly288, 303–307, and Arg329 contribute to the FMN site; these read RAS and KPTAT.

This sequence belongs to the chorismate synthase family. In terms of assembly, homotetramer. FMNH2 is required as a cofactor.

The enzyme catalyses 5-O-(1-carboxyvinyl)-3-phosphoshikimate = chorismate + phosphate. It functions in the pathway metabolic intermediate biosynthesis; chorismate biosynthesis; chorismate from D-erythrose 4-phosphate and phosphoenolpyruvate: step 7/7. Functionally, catalyzes the anti-1,4-elimination of the C-3 phosphate and the C-6 proR hydrogen from 5-enolpyruvylshikimate-3-phosphate (EPSP) to yield chorismate, which is the branch point compound that serves as the starting substrate for the three terminal pathways of aromatic amino acid biosynthesis. This reaction introduces a second double bond into the aromatic ring system. The polypeptide is Chorismate synthase (Synechococcus sp. (strain CC9902)).